The sequence spans 49 residues: Sporulation protein YjcZ (49 aa).

Residues 29–49 (STFVLLVVLFILLIIVGASFF) form a helical membrane-spanning segment.

This sequence belongs to the SscA family.

The protein localises to the membrane. This Bacillus subtilis (strain 168) protein is Sporulation protein YjcZ (yjcZ).